A 983-amino-acid chain; its full sequence is Chaperone protein ClpB3, mitochondrial (983 aa).

The N-terminal 87 residues, 1-87 (MSRATAVSRL…LFHPTQAARY (87 aa)), are a transit peptide targeting the mitochondrion. The 144-residue stretch at 97 to 240 (PGEFTEMAWE…KEAISAVRGS (144 aa)) folds into the Clp R domain. Repeat regions lie at residues 100–165 (FTEM…ISRQ) and 177–240 (IGSS…VRGS). Residues 255–503 (LEKYGIDMTE…KLKMEITSKP (249 aa)) form an i region. 300 to 307 (GEPGVGKT) provides a ligand contact to ATP. Positions 504-627 (IELDEVDREI…QQSGKSMLRE (124 aa)) form a coiled coil. The tract at residues 629 to 820 (VTDVDIAEIV…VIIMTSNIGS (192 aa)) is II. 703 to 710 (GPTGVGKT) provides a ligand contact to ATP.

It belongs to the ClpA/ClpB family.

It localises to the mitochondrion. In terms of biological role, molecular chaperone that may not be involved in heat stress response or tolerance. This Oryza sativa subsp. japonica (Rice) protein is Chaperone protein ClpB3, mitochondrial (CLPB3).